The primary structure comprises 412 residues: Branched-chain alpha-ketoacid dehydrogenase kinase (412 aa).

The transit peptide at methionine 1–arginine 30 directs the protein to the mitochondrion. Serine 31 is subject to Phosphoserine. The residue at position 52 (serine 52) is a Phosphoserine; by autocatalysis. In terms of domain architecture, Histidine kinase spans leucine 159–aspartate 404. N6-acetyllysine is present on residues lysine 192 and lysine 233. 2 residues coordinate ATP: asparagine 279 and aspartate 315. Asparagine 279 is a Mg(2+) binding site. 3 residues coordinate K(+): valine 328, aspartate 330, and phenylalanine 333. 2 residues coordinate ATP: threonine 334 and threonine 335. Residues serine 356 and serine 360 each carry the phosphoserine modification. Positions 364, 367, and 370 each coordinate ATP. Glycine 367 is a binding site for K(+).

This sequence belongs to the PDK/BCKDK protein kinase family. In terms of assembly, homodimer. Homotetramer. Dimerizes through interaction of two opposing nucleotide-binding domains. Interacts with E2 component of the branched-chain alpha-ketoacid dehydrogenase (BCKDH) complex. Competes with BCKDK for binding to the E2 component; this interaction is modulated by branched-chain alpha-keto acids. At steady state, BCKDH holoenzyme contains BCKDK and BCKDHA is phosphorylated. In response to high levels of branched-chain alpha-keto acids, the inhibitory BCKDK is replaced by activating PPM1K leading to BCKDHA dephosphorylation and BCAA degradation. Post-translationally, autophosphorylated.

The protein resides in the mitochondrion matrix. It is found in the mitochondrion. The enzyme catalyses L-seryl-[3-methyl-2-oxobutanoate dehydrogenase] + ATP = O-phospho-L-seryl-[3-methyl-2-oxobutanoate dehydrogenase] + ADP + H(+). It carries out the reaction L-seryl-[protein] + ATP = O-phospho-L-seryl-[protein] + ADP + H(+). Its function is as follows. Serine/threonine-protein kinase component of macronutrients metabolism. Forms a functional kinase and phosphatase pair with PPM1K, serving as a metabolic regulatory node that coordinates branched-chain amino acids (BCAAs) with glucose and lipid metabolism via two distinct phosphoprotein targets: mitochondrial BCKDHA subunit of the branched-chain alpha-ketoacid dehydrogenase (BCKDH) complex and cytosolic ACLY, a lipogenic enzyme of Krebs cycle. Phosphorylates and inactivates mitochondrial BCKDH complex a multisubunit complex consisting of three multimeric components each involved in different steps of BCAA catabolism: E1 composed of BCKDHA and BCKDHB, E2 core composed of DBT monomers, and E3 composed of DLD monomers. Associates with the E2 component of BCKDH complex and phosphorylates BCKDHA on Ser-347, leading to conformational changes that interrupt substrate channeling between E1 and E2 and inactivates the BCKDH complex. Phosphorylates ACLY on Ser-455 in response to changes in cellular carbohydrate abundance such as occurs during fasting to feeding metabolic transition. Refeeding stimulates MLXIPL/ChREBP transcription factor, leading to increased BCKDK to PPM1K expression ratio, phosphorylation and activation of ACLY that ultimately results in the generation of malonyl-CoA and oxaloacetate immediate substrates of de novo lipogenesis and glucogenesis, respectively. Recognizes phosphosites having SxxE/D canonical motif. The protein is Branched-chain alpha-ketoacid dehydrogenase kinase (BCKDK) of Bos taurus (Bovine).